We begin with the raw amino-acid sequence, 94 residues long: MNIYDVIKKPLITEKTTVEKDDKNVIAFVVNGAANKIEIKAAVEKLFNAQVSAVNTVNVAGKTKRTAKGIGKRSNWKKAYVTLKEGSNVDFFEA.

It belongs to the universal ribosomal protein uL23 family. As to quaternary structure, part of the 50S ribosomal subunit. Contacts protein L29, and trigger factor when it is bound to the ribosome.

Functionally, one of the early assembly proteins it binds 23S rRNA. One of the proteins that surrounds the polypeptide exit tunnel on the outside of the ribosome. Forms the main docking site for trigger factor binding to the ribosome. The sequence is that of Large ribosomal subunit protein uL23 from Geobacter sp. (strain M21).